Here is a 157-residue protein sequence, read N- to C-terminus: Small ribosomal subunit protein uS7 (157 aa).

The protein belongs to the universal ribosomal protein uS7 family. As to quaternary structure, part of the 30S ribosomal subunit. Contacts proteins S9 and S11.

Its function is as follows. One of the primary rRNA binding proteins, it binds directly to 16S rRNA where it nucleates assembly of the head domain of the 30S subunit. Is located at the subunit interface close to the decoding center, probably blocks exit of the E-site tRNA. The polypeptide is Small ribosomal subunit protein uS7 (Borrelia turicatae (strain 91E135)).